Consider the following 351-residue polypeptide: N-acetyl-gamma-glutamyl-phosphate reductase (351 aa).

The active site involves C154.

Belongs to the NAGSA dehydrogenase family. Type 1 subfamily.

It is found in the cytoplasm. The catalysed reaction is N-acetyl-L-glutamate 5-semialdehyde + phosphate + NADP(+) = N-acetyl-L-glutamyl 5-phosphate + NADPH + H(+). The protein operates within amino-acid biosynthesis; L-arginine biosynthesis; N(2)-acetyl-L-ornithine from L-glutamate: step 3/4. In terms of biological role, catalyzes the NADPH-dependent reduction of N-acetyl-5-glutamyl phosphate to yield N-acetyl-L-glutamate 5-semialdehyde. The polypeptide is N-acetyl-gamma-glutamyl-phosphate reductase (Prochlorococcus marinus (strain MIT 9515)).